The primary structure comprises 72 residues: Candidate secreted effector protein MPL124499 (72 aa).

Positions 1–21 (MKLSIFAAIFMAFVSLNQVFG) are cleaved as a signal peptide.

The protein belongs to the CPGH1 family.

It is found in the secreted. Its subcellular location is the host cell. It localises to the host cytoplasm. The protein resides in the host nucleus. Rust effector delivered into infected tissues to modulate host functions and contribute to pathogen virulence. Enhances leaf colonization by the bacteria Pseudomonas syringae and the oomycete Hyaloperonospora arabidopsidis pathogens in an Arabidopsis thaliana infection model. This chain is Candidate secreted effector protein MPL124499, found in Melampsora larici-populina (strain 98AG31 / pathotype 3-4-7) (Poplar leaf rust fungus).